The sequence spans 316 residues: Acetyl-coenzyme A carboxylase carboxyl transferase subunit alpha (316 aa).

Positions 39–293 (KLEEKNAQLT…KKHLQANLTN (255 aa)) constitute a CoA carboxyltransferase C-terminal domain.

It belongs to the AccA family. Acetyl-CoA carboxylase is a heterohexamer composed of biotin carboxyl carrier protein (AccB), biotin carboxylase (AccC) and two subunits each of ACCase subunit alpha (AccA) and ACCase subunit beta (AccD).

The protein localises to the cytoplasm. The enzyme catalyses N(6)-carboxybiotinyl-L-lysyl-[protein] + acetyl-CoA = N(6)-biotinyl-L-lysyl-[protein] + malonyl-CoA. It participates in lipid metabolism; malonyl-CoA biosynthesis; malonyl-CoA from acetyl-CoA: step 1/1. Component of the acetyl coenzyme A carboxylase (ACC) complex. First, biotin carboxylase catalyzes the carboxylation of biotin on its carrier protein (BCCP) and then the CO(2) group is transferred by the carboxyltransferase to acetyl-CoA to form malonyl-CoA. The polypeptide is Acetyl-coenzyme A carboxylase carboxyl transferase subunit alpha (Coxiella burnetii (strain RSA 331 / Henzerling II)).